The sequence spans 1786 residues: Protein TIC 214 (1786 aa).

A run of 6 helical transmembrane segments spans residues 19–39 (IINS…FSIG), 68–88 (FIAG…HLAL), 91–111 (PHTI…WNNH), 133–153 (VFLN…SSML), 176–196 (VGWL…LVWI), and 227–247 (IFSI…PSPI). Residues 1007–1046 (SLSEKKIKNLIDRKKTIRNQIEEISKEKQNLTNSCTKLRY) adopt a coiled-coil conformation.

Belongs to the TIC214 family. In terms of assembly, part of the Tic complex. Component of the 1-MD complex, composed of TIC20-I, TIC214, TIC100 and TIC56. Interacts with the translocating preproteins. Hydrolysis of ATP is essential for the formation of this complex. The 1-MD complex interacts with TIC21.

The protein resides in the plastid. It localises to the chloroplast inner membrane. Involved in protein precursor import into chloroplasts. May be part of an intermediate translocation complex acting as a protein-conducting channel at the inner envelope. In Arabidopsis thaliana (Mouse-ear cress), this protein is Protein TIC 214.